A 147-amino-acid polypeptide reads, in one-letter code: NADH-quinone oxidoreductase subunit A (147 aa).

3 helical membrane-spanning segments follow: residues 13-33, 70-90, and 104-124; these read LFSY…LGAV, YLVA…FSWA, and VVVF…WGAL.

Belongs to the complex I subunit 3 family. NDH-1 is composed of 14 different subunits. Subunits NuoA, H, J, K, L, M, N constitute the membrane sector of the complex.

The protein resides in the cell inner membrane. It catalyses the reaction a quinone + NADH + 5 H(+)(in) = a quinol + NAD(+) + 4 H(+)(out). In terms of biological role, NDH-1 shuttles electrons from NADH, via FMN and iron-sulfur (Fe-S) centers, to quinones in the respiratory chain. The immediate electron acceptor for the enzyme in this species is believed to be ubiquinone. Couples the redox reaction to proton translocation (for every two electrons transferred, four hydrogen ions are translocated across the cytoplasmic membrane), and thus conserves the redox energy in a proton gradient. The chain is NADH-quinone oxidoreductase subunit A from Gluconacetobacter diazotrophicus (strain ATCC 49037 / DSM 5601 / CCUG 37298 / CIP 103539 / LMG 7603 / PAl5).